A 611-amino-acid chain; its full sequence is POU domain, class 6, transcription factor 1 (611 aa).

The segment at 62–93 (ASQAAGEAGPDNLGSSAEATVKSPPGIPPSPA) is disordered. Residues 449-523 (EDGINLEEIR…VLEKWLNEAE (75 aa)) enclose the POU-specific domain. A DNA-binding region (homeobox) is located at residues 544 to 603 (KRKRRTSFTPQAIEALNAYFEKNPLPTGQEITEIAKELNYDREVVRVWFCNRRQTLKNTS).

The protein belongs to the POU transcription factor family. Class-6 subfamily. In the embryo, expressed exclusively in the developing brain, whereas in the adult its expression is restricted to brain, heart, skeletal muscle and lung. In the brain, the highest expression levels are found in specific cell layers of the cortex, the olfactory bulb, the hippocampus and the cerebellum.

The protein resides in the nucleus. Its function is as follows. Transcription factor that binds preferentially to a variant of the octamer motif (5'-ATGATAAT-3'). This Homo sapiens (Human) protein is POU domain, class 6, transcription factor 1 (POU6F1).